Consider the following 161-residue polypeptide: Nucleotide-binding protein Swoo_3646 (161 aa).

It belongs to the YajQ family.

Functionally, nucleotide-binding protein. The chain is Nucleotide-binding protein Swoo_3646 from Shewanella woodyi (strain ATCC 51908 / MS32).